The following is a 62-amino-acid chain: Chromatin protein Cren7 1 (62 aa).

Belongs to the Cren7 family. As to quaternary structure, monomer. Methylated at multiple sites, to varying extents.

It localises to the chromosome. Its subcellular location is the cytoplasm. Its function is as follows. A chromatin protein, binds double-stranded DNA without sequence specificity. Constrains negative DNA supercoils. This Hyperthermus butylicus (strain DSM 5456 / JCM 9403 / PLM1-5) protein is Chromatin protein Cren7 1 (cren7-1).